Reading from the N-terminus, the 361-residue chain is MAKKKIIFTGGGTVGHVTLNLLLIPRFLKDGWEVHYIGDKHGIEHEQIEQSDFDVIFHSIATGKLRRYFSLKNVLDVFKVGWGVLQSLTIMVKVRPQVLFSKGGFVSVPPVVAANLLRIPVFVHESDLSMGLANRIAYKFATTMYTTFEQSDNLTKTKHVGAITKVNQTISSSDDNTEIKTIKEYFDPRLKTLLFIGGSAGAKVFNQFISDTPELTKHYNVINISGDKTLNNLSQNLYRVDYVTEMYQPLMDLADVVITRGGSNTIFELLAMAKLHIIVPLGKEASRGDQLENAAYFEEKGYAQQLSEENLNFAELDKVIKDLLENQTVYQDKMTSSSEIKTPNDFYNLLLTDITSKSKGK.

UDP-N-acetyl-alpha-D-glucosamine is bound by residues Ser-199 and Gln-290.

It belongs to the glycosyltransferase 28 family. MurG subfamily.

It is found in the cell membrane. The catalysed reaction is Mur2Ac(oyl-L-Ala-gamma-D-Glu-L-Lys-D-Ala-D-Ala)-di-trans,octa-cis-undecaprenyl diphosphate + UDP-N-acetyl-alpha-D-glucosamine = beta-D-GlcNAc-(1-&gt;4)-Mur2Ac(oyl-L-Ala-gamma-D-Glu-L-Lys-D-Ala-D-Ala)-di-trans,octa-cis-undecaprenyl diphosphate + UDP + H(+). The protein operates within cell wall biogenesis; peptidoglycan biosynthesis. Functionally, cell wall formation. Catalyzes the transfer of a GlcNAc subunit on undecaprenyl-pyrophosphoryl-MurNAc-pentapeptide (lipid intermediate I) to form undecaprenyl-pyrophosphoryl-MurNAc-(pentapeptide)GlcNAc (lipid intermediate II). The protein is UDP-N-acetylglucosamine--N-acetylmuramyl-(pentapeptide) pyrophosphoryl-undecaprenol N-acetylglucosamine transferase of Streptococcus mutans serotype c (strain ATCC 700610 / UA159).